Here is a 151-residue protein sequence, read N- to C-terminus: Small ribosomal subunit protein uS11 (151 aa).

The interval 131 to 151 (DVTPVPSDSTRRKGGRRGRRL) is disordered. Over residues 142–151 (RKGGRRGRRL) the composition is skewed to basic residues.

Belongs to the universal ribosomal protein uS11 family.

The polypeptide is Small ribosomal subunit protein uS11 (Bombyx mori (Silk moth)).